Reading from the N-terminus, the 462-residue chain is NAD-capped RNA hydrolase NUDT12 (462 aa).

Residue Lys-10 is modified to N6-succinyllysine. 3 ANK repeats span residues 11–40, 45–74, and 78–98; these read EMIS…SLLN, NGWT…DRSL, and ARQT…ANLL. N6-succinyllysine is present on Lys-185. 2 residues coordinate Zn(2+): Cys-284 and Cys-287. Lys-292 bears the N6-succinyllysine mark. Zn(2+) is bound by residues Cys-302 and Cys-307. Substrate-binding positions include Tyr-318, 354–356, Glu-370, Glu-374, and Glu-415; that span reads AGF. One can recognise a Nudix hydrolase domain in the interval 319 to 453; it reads PRVDPVVIMQ…SRAIAHQLIK (135 aa). Mg(2+)-binding residues include Ala-354, Glu-370, Glu-374, and Glu-415. The Nudix box motif lies at 355–376; that stretch reads GFIEPGETIEDAVRREVEEESG. The short motif at 460-462 is the Microbody targeting signal element; sequence PNL.

Belongs to the Nudix hydrolase family. NudC subfamily. Homodimer. Homodimerization is essential for its catalytic activity and protein stability. Interacts (via ANK repeats) with BLMH. It depends on Mg(2+) as a cofactor. Zn(2+) is required as a cofactor. Expressed abundantly in the liver and kidney.

It localises to the cytoplasm. It is found in the peroxisome. The protein localises to the cytoplasmic granule. It carries out the reaction a 5'-end NAD(+)-phospho-ribonucleoside in mRNA + H2O = a 5'-end phospho-adenosine-phospho-ribonucleoside in mRNA + beta-nicotinamide D-ribonucleotide + 2 H(+). The enzyme catalyses NAD(+) + H2O = beta-nicotinamide D-ribonucleotide + AMP + 2 H(+). It catalyses the reaction NADH + H2O = reduced beta-nicotinamide D-ribonucleotide + AMP + 2 H(+). The catalysed reaction is NADPH + H2O = reduced beta-nicotinamide D-ribonucleotide + adenosine 2',5'-bisphosphate + 2 H(+). Functionally, mRNA decapping enzyme that specifically removes the nicotinamide adenine dinucleotide (NAD) cap from a subset of mRNAs by hydrolyzing the diphosphate linkage to produce nicotinamide mononucleotide (NMN) and 5' monophosphate mRNA. The NAD-cap is present at the 5'-end of some RNAs; in contrast to the canonical N7 methylguanosine (m7G) cap, the NAD cap promotes mRNA decay. Preferentially acts on NAD-capped transcripts in response to nutrient stress. Also acts on free nicotinamide adenine dinucleotide molecules: hydrolyzes NAD(H) into NMN(H) and AMP, and NADPH into NMNH and 2',5'-ADP. May act to regulate the concentration of peroxisomal nicotinamide nucleotide cofactors required for oxidative metabolism in this organelle. Regulates the levels of circadian clock components PER1, PER2, PER3 and CRY2 in the liver. This is NAD-capped RNA hydrolase NUDT12 from Mus musculus (Mouse).